Consider the following 502-residue polypeptide: MDLIPNLAVETWLLLAVSLVLLYLYGTRTHGLFKRLGIPGPTPLPLLGNVLSYRQGLWKFDTECYKKYGKMWGTYEGQLPVLAITDPDVIRTVLVKECYSVFTNRRSLGPVGFMKSAISLAEDEEWKRIRSLLSPTFTSGKLKEMFPIIAQYGDVLVRNLRREAEKGKPVTLKDIFGAYSMDVITGTSFGVNIDSLNNPQDPFVESTKKFLKFGFLDPLFLSIILFPFLTPVFEALNVSLFPKDTINFLSKSVNRMKKSRLNDKQKHRLDFLQLMIDSQNSKETESHKALSDLELAAQSIIFIFAGYETTSSVLSFTLYELATHPDVQQKLQKEIDAVLPNKAPPTYDAVVQMEYLDMVVNETLRLFPVAIRLERTCKKDVEINGVFIPKGSMVVIPTYALHHDPKYWTEPEEFRPERFSKKKDSIDPYIYTPFGTGPRNCIGMRFALMNMKLALIRVLQNFSFKPCKETQIPLKLDTQGLLQPEKPIVLKVDSRDGTLSGE.

Position 441 (cysteine 441) interacts with heme.

Belongs to the cytochrome P450 family. Heme serves as cofactor.

Its subcellular location is the endoplasmic reticulum membrane. The protein localises to the microsome membrane. The catalysed reaction is an organic molecule + reduced [NADPH--hemoprotein reductase] + O2 = an alcohol + oxidized [NADPH--hemoprotein reductase] + H2O + H(+). It carries out the reaction 17beta-estradiol + reduced [NADPH--hemoprotein reductase] + O2 = 2-hydroxy-17beta-estradiol + oxidized [NADPH--hemoprotein reductase] + H2O + H(+). The enzyme catalyses 17beta-estradiol + reduced [NADPH--hemoprotein reductase] + O2 = 4-hydroxy-17beta-estradiol + oxidized [NADPH--hemoprotein reductase] + H2O + H(+). It catalyses the reaction estrone + reduced [NADPH--hemoprotein reductase] + O2 = 2-hydroxyestrone + oxidized [NADPH--hemoprotein reductase] + H2O + H(+). The catalysed reaction is estrone + reduced [NADPH--hemoprotein reductase] + O2 = 4-hydroxyestrone + oxidized [NADPH--hemoprotein reductase] + H2O + H(+). It carries out the reaction testosterone + reduced [NADPH--hemoprotein reductase] + O2 = 6beta,17beta-dihydroxyandrost-4-en-3-one + oxidized [NADPH--hemoprotein reductase] + H2O + H(+). The enzyme catalyses androst-4-ene-3,17-dione + reduced [NADPH--hemoprotein reductase] + O2 = 6beta-hydroxyandrost-4-ene-3,17-dione + oxidized [NADPH--hemoprotein reductase] + H2O + H(+). It catalyses the reaction progesterone + reduced [NADPH--hemoprotein reductase] + O2 = 6beta-hydroxyprogesterone + oxidized [NADPH--hemoprotein reductase] + H2O + H(+). The catalysed reaction is all-trans-retinol + reduced [NADPH--hemoprotein reductase] + O2 = all-trans-retinal + oxidized [NADPH--hemoprotein reductase] + 2 H2O + H(+). It carries out the reaction all-trans-retinoate + reduced [NADPH--hemoprotein reductase] + O2 = all-trans-4-hydroxyretinoate + oxidized [NADPH--hemoprotein reductase] + H2O + H(+). It participates in steroid hormone biosynthesis. Its pathway is cofactor metabolism; retinol metabolism. A cytochrome P450 monooxygenase involved in the metabolism of steroid hormones and vitamins. Mechanistically, uses molecular oxygen inserting one oxygen atom into a substrate, and reducing the second into a water molecule, with two electrons provided by NADPH via cytochrome P450 reductase (NADPH--hemoprotein reductase). Catalyzes the hydroxylation of carbon-hydrogen bonds. Exhibits high catalytic activity for the formation of catechol estrogens from 17beta-estradiol (E2) and estrone (E1), namely 2-hydroxy E1 and E2. Catalyzes 6beta-hydroxylation of the steroid hormones testosterone, progesterone, and androstenedione. Catalyzes the oxidative conversion of all-trans-retinol to all-trans-retinal, a rate-limiting step for the biosynthesis of all-trans-retinoic acid (atRA). Further metabolizes all trans-retinoic acid (atRA) to 4-hydroxyretinoate and may play a role in hepatic atRA clearance. Also involved in the oxidative metabolism of xenobiotics, including calcium channel blocking drug nifedipine and immunosuppressive drug cyclosporine. This Homo sapiens (Human) protein is Cytochrome P450 3A5.